Reading from the N-terminus, the 493-residue chain is Protein LTV1 homolog (493 aa).

Disordered regions lie at residues 42 to 63 (AAARQQKPKDPEPPTDPAQRQE), 97 to 119 (PNQARKQKVQDSEKPGPAPKLML), and 170 to 207 (IQAMAEGDSDDEEWDDEDGEEQSDMDFDSDDLNEDENE). Residues 176 to 207 (GDSDDEEWDDEDGEEQSDMDFDSDDLNEDENE) are compositionally biased toward acidic residues. Residues serine 345, serine 369, serine 370, serine 424, and serine 427 each carry the phosphoserine modification. The segment at 359–387 (VIDEPRRSRRSSASTNPAPIQIDPKTGLP) is disordered. The stretch at 437–468 (KDETHEEKKERKRLLKDYRNERRIEKKANTEA) forms a coiled coil. Basic and acidic residues predominate over residues 465-474 (NTEAFKEEKK). A disordered region spans residues 465 to 493 (NTEAFKEEKKRQTHVKINQRTNQQGASIV). Residues 479–493 (VKINQRTNQQGASIV) show a composition bias toward polar residues.

It belongs to the LTV1 family. In terms of assembly, interacts with RpS3; the interaction is RNA-independent. Associates with free 40S ribosome subunits.

Its subcellular location is the cytoplasm. Its function is as follows. Necessary for the biogenesis of 40S ribosome subunits by regulating pre-rRNA processing. Non-ribosomal factor required for efficient nuclear export of the ribosomal 40S subunit. Necessary for endoreplication driven by Myc. The chain is Protein LTV1 homolog from Drosophila melanogaster (Fruit fly).